A 450-amino-acid chain; its full sequence is Alpha-2B adrenergic receptor (450 aa).

The Extracellular portion of the chain corresponds to 1 to 12; that stretch reads MDHQDPYSVQAT. Residues 13–38 traverse the membrane as a helical segment; sequence AAIAAAITFLILFTIFGNALVILAVL. Topologically, residues 39-48 are cytoplasmic; it reads TSRSLRAPQN. The helical transmembrane segment at 49 to 69 threads the bilayer; that stretch reads LFLVSLAAADILVATLIIPFS. Over 70 to 86 the chain is Extracellular; that stretch reads LANELLGYWYFRRTWCE. An intrachain disulfide couples C85 to C164. Residues 87–107 traverse the membrane as a helical segment; it reads VYLALDVLFCTSSIVHLCAIS. The Cytoplasmic portion of the chain corresponds to 108–128; it reads LDRYWAVSRALEYNSKRTPRR. The chain crosses the membrane as a helical span at residues 129 to 149; the sequence is IKCIILTVWLIAAVISLPPLI. At 150-172 the chain is on the extracellular side; sequence YKGDQGPQPRGRPQCKLNQEAWY. A helical transmembrane segment spans residues 173 to 193; it reads ILASSIGSFFAPCLIMILVYL. Over 194–368 the chain is Cytoplasmic; sequence RIYLIAKRSN…RRAQLTREKR (175 aa). Disordered regions lie at residues 204–229 and 241–329; these read RRGPRAKGGPGQGESKQPRPDHGGAL and ASAR…PLQQ. Residues 246–256 show a composition bias toward basic and acidic residues; sequence VNGHSKSTGEK. The segment covering 293-311 has biased composition (acidic residues); sequence PEDEAEEEEEEEEEEEECE. The span at 312-326 shows a compositional bias: low complexity; it reads PQAVPVSPASACSPP. A helical transmembrane segment spans residues 369-389; that stretch reads FTFVLAVVIGVFVLCWFPFFF. Residues 390–405 lie on the Extracellular side of the membrane; sequence SYSLGAICPKHCKVPH. Residues 406-426 form a helical membrane-spanning segment; the sequence is GLFQFFFWIGYCNSSLNPVIY. The Cytoplasmic portion of the chain corresponds to 427–450; the sequence is TIFNQDFRRAFRRILCRPWTQTAW. The S-palmitoyl cysteine moiety is linked to residue C442.

Belongs to the G-protein coupled receptor 1 family. Adrenergic receptor subfamily. ADRA2B sub-subfamily. Interacts with RAB26. Interacts with PPP1R9B. Interacts with GGA1, GGA2 and GGA3.

The protein localises to the cell membrane. Functionally, alpha-2 adrenergic receptors mediate the catecholamine-induced inhibition of adenylate cyclase through the action of G proteins. The rank order of potency for agonists of this receptor is clonidine &gt; norepinephrine &gt; epinephrine = oxymetazoline &gt; dopamine &gt; p-tyramine = phenylephrine &gt; serotonin &gt; p-synephrine / p-octopamine. For antagonists, the rank order is yohimbine &gt; chlorpromazine &gt; phentolamine &gt; mianserine &gt; spiperone &gt; prazosin &gt; alprenolol &gt; propanolol &gt; pindolol. This Homo sapiens (Human) protein is Alpha-2B adrenergic receptor (ADRA2B).